A 603-amino-acid polypeptide reads, in one-letter code: Serine palmitoyltransferase 2 (603 aa).

Residues 90-107 (YYYVVATYLTYLVLIIIG) traverse the membrane as a helical segment. Position 398 is an N6-(pyridoxal phosphate)lysine (Lys398).

It belongs to the class-II pyridoxal-phosphate-dependent aminotransferase family. As to quaternary structure, lcb1 and lcb2 encode essential subunits of the enzyme and form a heterodimer. Pyridoxal 5'-phosphate is required as a cofactor.

Its subcellular location is the cytoplasm. It is found in the endoplasmic reticulum. The protein resides in the membrane. It carries out the reaction L-serine + hexadecanoyl-CoA + H(+) = 3-oxosphinganine + CO2 + CoA. It functions in the pathway lipid metabolism; sphingolipid metabolism. Catalytic subunit of serine palmitoyltransferase (SPT), which catalyzes the committed step in the synthesis of sphingolipids, the condensation of serine with palmitoyl CoA to form the long chain base 3-ketosphinganine. The protein is Serine palmitoyltransferase 2 (lcb2) of Schizosaccharomyces pombe (strain 972 / ATCC 24843) (Fission yeast).